Here is a 263-residue protein sequence, read N- to C-terminus: Phosphate import ATP-binding protein PstB (263 aa).

Positions 16 to 258 (VTARNVTVSY…PRDTRTQDYI (243 aa)) constitute an ABC transporter domain. 48-55 (GPSGCGKS) is an ATP binding site.

Belongs to the ABC transporter superfamily. Phosphate importer (TC 3.A.1.7) family. The complex is composed of two ATP-binding proteins (PstB), two transmembrane proteins (PstC and PstA) and a solute-binding protein (PstS).

It localises to the cell inner membrane. The catalysed reaction is phosphate(out) + ATP + H2O = ADP + 2 phosphate(in) + H(+). Functionally, part of the ABC transporter complex PstSACB involved in phosphate import. Responsible for energy coupling to the transport system. The chain is Phosphate import ATP-binding protein PstB from Maricaulis maris (strain MCS10) (Caulobacter maris).